A 300-amino-acid polypeptide reads, in one-letter code: uncharacterized protein (300 aa).

An N-terminal signal peptide occupies residues 1–22 (MKSFVWTLLGALSLGSLTTAYG).

Its subcellular location is the endoplasmic reticulum. This is an uncharacterized protein from Schizosaccharomyces pombe (strain 972 / ATCC 24843) (Fission yeast).